The following is a 749-amino-acid chain: Small G protein signaling modulator 3 (749 aa).

A Rab-GAP TBC domain is found at 114–305; that stretch reads GIPHGMRPQL…RIWDLFFYEG (192 aa). The residue at position 406 (Ser-406) is a Phosphoserine. Positions 415–439 form a coiled coil; the sequence is EDDLEALKAKNIKQTELVADLREAI. Positions 480–539 constitute an SH3 domain; the sequence is SHRRRAKALLDFERHDDDELGFRKNDIITIVSQKDEHCWVGELNGLRGWFPAKFVEVLDE. In terms of domain architecture, RUN spans 555-718; the sequence is GVTDLVRGTL…FAFSLSQDWE (164 aa).

It belongs to the small G protein signaling modulator family. As to quaternary structure, interacts with GJA1. Interaction with GJA1 induces its degradation. Interacts via its RUN domain with the C-terminal region of NF2. Interacts with RAB3A, RAB4A, RAB5A, RAB8A, RAB11A, RAP1A, RAP1B, RAP2A, RAP2B and PDCD6IP. No interaction with RAB27A. In terms of tissue distribution, widely expressed.

It localises to the cytoplasm. Functionally, may play a cooperative role in NF2-mediated growth suppression of cells. The polypeptide is Small G protein signaling modulator 3 (Homo sapiens (Human)).